Reading from the N-terminus, the 328-residue chain is Phosphate acyltransferase (328 aa).

The protein belongs to the PlsX family. Homodimer. Probably interacts with PlsY.

The protein resides in the cytoplasm. The enzyme catalyses a fatty acyl-[ACP] + phosphate = an acyl phosphate + holo-[ACP]. It participates in lipid metabolism; phospholipid metabolism. Functionally, catalyzes the reversible formation of acyl-phosphate (acyl-PO(4)) from acyl-[acyl-carrier-protein] (acyl-ACP). This enzyme utilizes acyl-ACP as fatty acyl donor, but not acyl-CoA. The sequence is that of Phosphate acyltransferase from Campylobacter jejuni (strain RM1221).